The chain runs to 368 residues: Spore germination protein B2 (368 aa).

10 helical membrane-spanning segments follow: residues 10–30 (FMQTLIMISSTLIGAGVLTLP), 43–63 (LMILLQGVIFIIIVLLFLPFL), 82–102 (FIGFLLNLYICLYFIGIVCFQ), 120–140 (MAVVVFIFLAVAIYHVGGGVY), 145–165 (VYAYIFPITLIIFMMLLMFSF), 187–207 (LFPKTLLYFSGFEIIFYLVPF), 217–237 (AVALGIATSTLFYSITLLIVI), 282–302 (FACMLGSFKGAHIGLTEIFHL), 308–328 (AWLLTAMLAATFFITMYPKDL), and 338–358 (LGYAFLIVITIPFFVWFLSWI).

Belongs to the amino acid-polyamine-organocation (APC) superfamily. Spore germination protein (SGP) (TC 2.A.3.9) family.

Its subcellular location is the cell membrane. Functionally, involved in the response to the germinative mixture of L-asparagine, glucose, fructose and potassium ions (AGFK). Could be an amino acid transporter. Cannot stimulate germination in the absence of gerD and gerK gene products (fructose and glucose receptors, respectively). The chain is Spore germination protein B2 (gerBB) from Bacillus subtilis (strain 168).